A 234-amino-acid polypeptide reads, in one-letter code: Multicopy suppressor of SEC21 protein 28 (234 aa).

Residues M1 to R47 lie on the Cytoplasmic side of the membrane. T3 is modified (phosphothreonine). A helical membrane pass occupies residues Y48 to F68. The Extracellular portion of the chain corresponds to N69–E72. A helical membrane pass occupies residues A73 to L93. Over S94–E234 the chain is Cytoplasmic. Positions K231–E234 are COPI binding.

It belongs to the DUP/COS family. As to quaternary structure, interacts with MST27. Binds to coatomer proteins of COPI and SEC23/SEC24 of COPII coated vesicles.

It is found in the endoplasmic reticulum. The protein localises to the golgi apparatus. The protein resides in the cytoplasmic vesicle. Its subcellular location is the COPI-coated vesicle membrane. It localises to the COPII-coated vesicle membrane. In terms of biological role, involved in protein trafficking vesicle formation, probably by stabilizing of coatomer at the Golgi membrane and thus allowing the efficient formation of COPI coated vesicles. The chain is Multicopy suppressor of SEC21 protein 28 (MST28) from Saccharomyces cerevisiae (strain ATCC 204508 / S288c) (Baker's yeast).